The sequence spans 655 residues: FYVE, RhoGEF and PH domain-containing protein 2 (655 aa).

A phosphoserine mark is found at Ser-11 and Ser-48. Residues 18–64 (VFENSRTPEAAPRGQRLEDVHHRPECRPPESPGPREKTNVGEAVGSE) form a disordered region. Residues 32 to 56 (QRLEDVHHRPECRPPESPGPREKTN) show a composition bias toward basic and acidic residues. The DH domain occupies 102–290 (PEKKIVQELL…FSAAQHSNAA (189 aa)). The PH 1 domain maps to 319 to 418 (TLLREGPVLK…WMQAFQAAID (100 aa)). The segment at 458-518 (DKMVTMCMRC…VCLHCYAFLT (61 aa)) adopts an FYVE-type zinc-finger fold. Zn(2+)-binding residues include Cys-464, Cys-467, Cys-481, Cys-484, Cys-489, Cys-492, Cys-510, and Cys-513. The PH 2 domain occupies 544 to 641 (QSLMCSFLQL…WVKAMERAAS (98 aa)). At Ser-654 the chain carries Phosphoserine.

The protein resides in the cytoplasm. The protein localises to the cytoskeleton. It is found in the nucleus. Its subcellular location is the early endosome. It localises to the early endosome membrane. The protein resides in the cell projection. The protein localises to the ruffle membrane. Functionally, activates CDC42, a member of the Ras-like family of Rho- and Rac proteins, by exchanging bound GDP for free GTP. Activates JNK1 via CDC42 but not RAC1. Binds to phosphatidylinositol 4,5-bisphosphate, phosphatidylinositol 3,4,5-trisphosphate, phosphatidylinositol 5-monophosphate, phosphatidylinositol 4-monophosphate and phosphatidylinositol 3-monophosphate. The polypeptide is FYVE, RhoGEF and PH domain-containing protein 2 (FGD2) (Homo sapiens (Human)).